The primary structure comprises 412 residues: Peptidase T (412 aa).

H81 provides a ligand contact to Zn(2+). Residue D83 is part of the active site. D144 lines the Zn(2+) pocket. The active-site Proton acceptor is E178. Positions 179, 201, and 383 each coordinate Zn(2+).

The protein belongs to the peptidase M20B family. The cofactor is Zn(2+).

It is found in the cytoplasm. It catalyses the reaction Release of the N-terminal residue from a tripeptide.. Its function is as follows. Cleaves the N-terminal amino acid of tripeptides. This Bacillus cereus (strain Q1) protein is Peptidase T.